The following is a 691-amino-acid chain: Mediator of RNA polymerase II transcription subunit 17 (691 aa).

Positions Lys-158–Lys-185 form a coiled coil.

Belongs to the Mediator complex subunit 17 family. As to quaternary structure, component of the Mediator complex.

It is found in the nucleus. In terms of biological role, component of the Mediator complex, a coactivator involved in the regulated transcription of nearly all RNA polymerase II-dependent genes. Mediator functions as a bridge to convey information from gene-specific regulatory proteins to the basal RNA polymerase II transcription machinery. Mediator is recruited to promoters by direct interactions with regulatory proteins and serves as a scaffold for the assembly of a functional preinitiation complex with RNA polymerase II and the general transcription factors. This is Mediator of RNA polymerase II transcription subunit 17 (SRB4) from Coccidioides immitis (strain RS) (Valley fever fungus).